The following is a 368-amino-acid chain: Queuine tRNA-ribosyltransferase (368 aa).

Residue Asp89 is the Proton acceptor of the active site. Residues 89 to 93, Asp143, and Gly216 contribute to the substrate site; that span reads DSGGF. Positions 247 to 253 are RNA binding; that stretch reads GVGKPED. The Nucleophile role is filled by Asp266. The interval 271-275 is RNA binding; important for wobble base 34 recognition; it reads TRNAR. Cys304, Cys306, Cys309, and His335 together coordinate Zn(2+).

The protein belongs to the queuine tRNA-ribosyltransferase family. In terms of assembly, homodimer. Within each dimer, one monomer is responsible for RNA recognition and catalysis, while the other monomer binds to the replacement base PreQ1. The cofactor is Zn(2+).

The enzyme catalyses 7-aminomethyl-7-carbaguanine + guanosine(34) in tRNA = 7-aminomethyl-7-carbaguanosine(34) in tRNA + guanine. Its pathway is tRNA modification; tRNA-queuosine biosynthesis. Functionally, catalyzes the base-exchange of a guanine (G) residue with the queuine precursor 7-aminomethyl-7-deazaguanine (PreQ1) at position 34 (anticodon wobble position) in tRNAs with GU(N) anticodons (tRNA-Asp, -Asn, -His and -Tyr). Catalysis occurs through a double-displacement mechanism. The nucleophile active site attacks the C1' of nucleotide 34 to detach the guanine base from the RNA, forming a covalent enzyme-RNA intermediate. The proton acceptor active site deprotonates the incoming PreQ1, allowing a nucleophilic attack on the C1' of the ribose to form the product. After dissociation, two additional enzymatic reactions on the tRNA convert PreQ1 to queuine (Q), resulting in the hypermodified nucleoside queuosine (7-(((4,5-cis-dihydroxy-2-cyclopenten-1-yl)amino)methyl)-7-deazaguanosine). This is Queuine tRNA-ribosyltransferase from Buchnera aphidicola subsp. Schizaphis graminum (strain Sg).